A 376-amino-acid polypeptide reads, in one-letter code: Succinyl-diaminopimelate desuccinylase (376 aa).

Position 66 (histidine 66) interacts with Zn(2+). Aspartate 68 is a catalytic residue. Aspartate 99 contributes to the Zn(2+) binding site. Glutamate 133 (proton acceptor) is an active-site residue. Residues glutamate 134, glutamate 162, and histidine 348 each coordinate Zn(2+).

Belongs to the peptidase M20A family. DapE subfamily. Homodimer. Zn(2+) is required as a cofactor. Requires Co(2+) as cofactor.

The enzyme catalyses N-succinyl-(2S,6S)-2,6-diaminopimelate + H2O = (2S,6S)-2,6-diaminopimelate + succinate. Its pathway is amino-acid biosynthesis; L-lysine biosynthesis via DAP pathway; LL-2,6-diaminopimelate from (S)-tetrahydrodipicolinate (succinylase route): step 3/3. Its function is as follows. Catalyzes the hydrolysis of N-succinyl-L,L-diaminopimelic acid (SDAP), forming succinate and LL-2,6-diaminopimelate (DAP), an intermediate involved in the bacterial biosynthesis of lysine and meso-diaminopimelic acid, an essential component of bacterial cell walls. This chain is Succinyl-diaminopimelate desuccinylase, found in Thioalkalivibrio sulfidiphilus (strain HL-EbGR7).